The sequence spans 54 residues: Ovomucoid (54 aa).

Positions 4–54 constitute a Kazal-like domain; it reads VDCSGYPQSACPQDYVPFCGSDNKTYSNKCNFCNAVADSNGTLTLSHFGKC. 3 cysteine pairs are disulfide-bonded: Cys-6–Cys-36, Cys-14–Cys-33, and Cys-22–Cys-54. A glycan (N-linked (GlcNAc...) asparagine) is linked at Asn-43.

The protein localises to the secreted. This Gallirallus australis (Weka) protein is Ovomucoid.